Consider the following 402-residue polypeptide: D-mannonate dehydratase (402 aa).

The substrate site is built by Asn37 and His122. Catalysis depends on Tyr159, which acts as the Proton donor/acceptor. Asp210 serves as a coordination point for Mg(2+). His212 functions as the Proton donor/acceptor in the catalytic mechanism. The Mg(2+) site is built by Glu236 and Glu262. 5 residues coordinate substrate: Glu262, Arg283, His312, Asp316, and Glu339.

This sequence belongs to the mandelate racemase/muconate lactonizing enzyme family. GalD subfamily. As to quaternary structure, homotetramer. It depends on Mg(2+) as a cofactor.

The catalysed reaction is D-mannonate = 2-dehydro-3-deoxy-D-gluconate + H2O. The protein operates within carbohydrate metabolism; pentose and glucuronate interconversion. Functionally, catalyzes the dehydration of D-mannonate. Has no detectable activity with a panel of 70 other acid sugars (in vitro). In Novosphingobium aromaticivorans (strain ATCC 700278 / DSM 12444 / CCUG 56034 / CIP 105152 / NBRC 16084 / F199), this protein is D-mannonate dehydratase (manD).